A 426-amino-acid polypeptide reads, in one-letter code: Riboflavin biosynthesis protein PYRD, chloroplastic (426 aa).

The N-terminal 61 residues, 1–61 (MQISCLPISI…SQTGFSNPVL (61 aa)), are a transit peptide targeting the chloroplast. One can recognise a CMP/dCMP-type deaminase domain in the interval 72–194 (VDDSFYMRKC…RLKDAGIDVT (123 aa)). Residue histidine 121 coordinates Zn(2+). The active-site Proton donor is glutamate 123. The Zn(2+) site is built by cysteine 146 and cysteine 155.

Zn(2+) is required as a cofactor.

It localises to the plastid. Its subcellular location is the chloroplast. The enzyme catalyses 2,5-diamino-6-hydroxy-4-(5-phosphoribosylamino)-pyrimidine + H2O + H(+) = 5-amino-6-(5-phospho-D-ribosylamino)uracil + NH4(+). The protein operates within cofactor biosynthesis; riboflavin biosynthesis; 5-amino-6-(D-ribitylamino)uracil from GTP: step 2/4. Its function is as follows. Monofunctional pyrimidine deaminase involved in the riboflavin biosynthesis pathway. Also has a reductase domain that lacks catalytically essential substrate-binding residues. This is Riboflavin biosynthesis protein PYRD, chloroplastic (PYRD) from Arabidopsis thaliana (Mouse-ear cress).